The following is a 203-amino-acid chain: ATP-dependent Clp protease proteolytic subunit (203 aa).

S107 serves as the catalytic Nucleophile. Residue H132 is part of the active site.

It belongs to the peptidase S14 family. As to quaternary structure, fourteen ClpP subunits assemble into 2 heptameric rings which stack back to back to give a disk-like structure with a central cavity, resembling the structure of eukaryotic proteasomes.

Its subcellular location is the cytoplasm. It carries out the reaction Hydrolysis of proteins to small peptides in the presence of ATP and magnesium. alpha-casein is the usual test substrate. In the absence of ATP, only oligopeptides shorter than five residues are hydrolyzed (such as succinyl-Leu-Tyr-|-NHMec, and Leu-Tyr-Leu-|-Tyr-Trp, in which cleavage of the -Tyr-|-Leu- and -Tyr-|-Trp bonds also occurs).. Functionally, cleaves peptides in various proteins in a process that requires ATP hydrolysis. Has a chymotrypsin-like activity. Plays a major role in the degradation of misfolded proteins. This chain is ATP-dependent Clp protease proteolytic subunit, found in Shewanella woodyi (strain ATCC 51908 / MS32).